The following is a 23-amino-acid chain: Glutamine synthetase (23 aa).

It belongs to the glutamine synthetase family. In terms of assembly, oligomer of 12 subunits arranged in the form of two hexagons. Mg(2+) serves as cofactor.

Its subcellular location is the cytoplasm. The catalysed reaction is L-glutamate + NH4(+) + ATP = L-glutamine + ADP + phosphate + H(+). The activity of this enzyme could be controlled by adenylation under conditions of abundant glutamine. Functionally, involved in nitrogen metabolism via ammonium assimilation. Catalyzes the ATP-dependent biosynthesis of glutamine from glutamate and ammonia. The chain is Glutamine synthetase from Phormidium lapideum.